The primary structure comprises 190 residues: Probable RNA-binding protein 18 (190 aa).

The region spanning 25-106 (HRLWIGNLDP…KKLVVRWAHA (82 aa)) is the RRM domain. A disordered region spans residues 166-190 (VYSYFKPPDKKRTTPYSRTAWKSRR).

This is Probable RNA-binding protein 18 (Rbm18) from Mus musculus (Mouse).